Here is a 354-residue protein sequence, read N- to C-terminus: Probable serine acetyltransferase 2 (354 aa).

This sequence belongs to the transferase hexapeptide repeat family. In terms of assembly, homomultimer.

It carries out the reaction L-serine + acetyl-CoA = O-acetyl-L-serine + CoA. It functions in the pathway amino-acid biosynthesis; L-cysteine biosynthesis; L-cysteine from L-serine: step 1/2. The polypeptide is Probable serine acetyltransferase 2 (SAT2) (Oryza sativa subsp. japonica (Rice)).